The sequence spans 399 residues: Sperm equatorial segment protein 1 (399 aa).

Positions Met1–Ala18 are cleaved as a signal peptide. N-linked (GlcNAc...) asparagine glycosylation is present at Asn128. A compositionally biased stretch (basic and acidic residues) spans Glu136 to Glu145. The segment at Glu136 to His250 is disordered. Acidic residues predominate over residues Pro157–Pro167. The segment covering Val182–Asn206 has biased composition (polar residues). Over residues Thr207–Ser225 the composition is skewed to low complexity.

The protein belongs to the SPESP1 family. Post-translationally, glycosylated. In testis there are two predominant forms of 77- and 67-kDa and a form of 47-kDa, whereas in epididymal sperm from caput, corpus, and cauda there are two forms of 47- and 43-kDa. Testis forms contain complex carbohydrate residues. Epididymal sperm forms are N-glycosylated. Then undergoes significant glycosylation in the testis and that the majority of these glycoconjugates are removed by the time sperm reach the caput epididymis. In terms of tissue distribution, testis specific.

It is found in the cytoplasmic vesicle. The protein resides in the secretory vesicle. Its subcellular location is the acrosome. Functionally, involved in fertilization ability of sperm. In Mus musculus (Mouse), this protein is Sperm equatorial segment protein 1.